The sequence spans 147 residues: Lysozyme C (147 aa).

Positions methionine 1–glycine 18 are cleaved as a signal peptide. Positions lysine 19 to leucine 147 constitute a C-type lysozyme domain. Intrachain disulfides connect cysteine 24–cysteine 145, cysteine 48–cysteine 133, cysteine 83–cysteine 99, and cysteine 95–cysteine 113. Residues glutamate 53 and aspartate 71 contribute to the active site.

This sequence belongs to the glycosyl hydrolase 22 family. As to quaternary structure, monomer. As to expression, stomach-specific.

The catalysed reaction is Hydrolysis of (1-&gt;4)-beta-linkages between N-acetylmuramic acid and N-acetyl-D-glucosamine residues in a peptidoglycan and between N-acetyl-D-glucosamine residues in chitodextrins.. Lysozymes have primarily a bacteriolytic function; those in tissues and body fluids are associated with the monocyte-macrophage system and enhance the activity of immunoagents. This Bos taurus (Bovine) protein is Lysozyme C (LYZ1).